Consider the following 156-residue polypeptide: SsrA-binding protein (156 aa).

This sequence belongs to the SmpB family.

The protein resides in the cytoplasm. In terms of biological role, required for rescue of stalled ribosomes mediated by trans-translation. Binds to transfer-messenger RNA (tmRNA), required for stable association of tmRNA with ribosomes. tmRNA and SmpB together mimic tRNA shape, replacing the anticodon stem-loop with SmpB. tmRNA is encoded by the ssrA gene; the 2 termini fold to resemble tRNA(Ala) and it encodes a 'tag peptide', a short internal open reading frame. During trans-translation Ala-aminoacylated tmRNA acts like a tRNA, entering the A-site of stalled ribosomes, displacing the stalled mRNA. The ribosome then switches to translate the ORF on the tmRNA; the nascent peptide is terminated with the 'tag peptide' encoded by the tmRNA and targeted for degradation. The ribosome is freed to recommence translation, which seems to be the essential function of trans-translation. The protein is SsrA-binding protein of Paracoccus denitrificans (strain Pd 1222).